The primary structure comprises 836 residues: Transcriptional regulatory protein UME6 (836 aa).

Residues 1-14 show a composition bias toward basic and acidic residues; sequence MLDKARSQSKHMDE. 4 disordered regions span residues 1–77, 92–168, 218–332, and 381–464; these read MLDK…IESL, STCA…CNGH, HLPP…DDQC, and NESS…GFFY. 3 stretches are compositionally biased toward polar residues: residues 39 to 48, 61 to 77, and 92 to 112; these read SRATLMNSSQ, GANS…IESL, and STCA…SLKV. S114 carries the post-translational modification Phosphoserine. Over residues 117–126 the composition is skewed to basic and acidic residues; that stretch reads DIKDDPKEND. Residues S141, S150, and S228 each carry the phosphoserine modification. A compositionally biased stretch (low complexity) spans 226–236; the sequence is AVSSPGTTAAG. Residues 258 to 272 are compositionally biased toward polar residues; the sequence is TSANKNNGKTTNSPM. Positions 273 to 305 are enriched in low complexity; sequence SILSRNNSTNNNDNNSIQSSDSRESSNNNEIGG. 2 positions are modified to phosphoserine: S316 and S318. Residues 316–325 show a composition bias toward polar residues; that stretch reads SPSNDSQVQH. A compositionally biased stretch (low complexity) spans 381 to 398; that stretch reads NESSSNNASSNTDTPTNS. Over residues 399–414 the composition is skewed to polar residues; sequence RHANTSSSITSRNNFQ. Residues 426–446 show a composition bias toward low complexity; that stretch reads PTSASSFTSTNNNNPQRNNIN. The segment at 508 to 594 is SIN3-binding; it reads NSASSSTKLD…QPIFESNNST (87 aa). A disordered region spans residues 636–766; sequence NGKRIDRRLS…ATSSTSQGTR (131 aa). Position 645 is a phosphoserine (S645). The span at 670–679 shows a compositional bias: polar residues; sequence VASQTNSDYN. The span at 680 to 702 shows a compositional bias: low complexity; that stretch reads SLGESSTSSAPSSPSLKASSGLA. Residues 718-739 are compositionally biased toward basic residues; it reads SKGKNVKPKAKSKAKQSSKKRP. The span at 740–751 shows a compositional bias: low complexity; it reads NNTTSKSKANNS. The segment at residues 771-798 is a DNA-binding region (zn(2)-C6 fungal-type); it reads CWICRLRKKKCTEERPHCFNCERLKLDC.

Component of the RPD3C(L) complex composed of at least ASH1, CTI6, DEP1, PHO23, RPD3, RXT2, RXT3, SAP30, SDS3, SIN3, UME1 and UME6. Interacts with RIM11, MCK1 and IME1. Post-translationally, phosphorylated by RIM11 and MCK1.

The protein resides in the nucleus. Its function is as follows. Component of the RPD3C(L) histone deacetylase complex (HDAC) responsible for the deacetylation of lysine residues on the N-terminal part of the core histones (H2A, H2B, H3 and H4). Histone deacetylation gives a tag for epigenetic repression and plays an important role in transcriptional regulation, cell cycle progression and developmental events. Binds to the URS1 site (5'-AGCCGCCGA-3') and recruits the RPD3 histone deacetylase complex to the promoters to negatively regulate the expression of many genes including CAR1 (arginase), several required for sporulation, mating type switching, inositol metabolism, and oxidative carbon metabolism. Also recruits the ISW2 chromatin remodeling complex to promoters in a second gene repression pathway. Associates with the master regulator of meiosis IME1 in order to activate the expression of meiosis genes. Has both a positive and negative role in regulating phospholipid biosynthesis. This chain is Transcriptional regulatory protein UME6 (UME6), found in Saccharomyces cerevisiae (strain ATCC 204508 / S288c) (Baker's yeast).